The following is a 278-amino-acid chain: Large ribosomal subunit protein uL2 (278 aa).

The interval 225–278 (MNPVDHPHGGGEGRTSGGRHPVTPWGKPTKGKKTRANKATDKYIVRSRHQKKKG) is disordered. A compositionally biased stretch (basic residues) spans 269–278 (VRSRHQKKKG).

Belongs to the universal ribosomal protein uL2 family. As to quaternary structure, part of the 50S ribosomal subunit. Forms a bridge to the 30S subunit in the 70S ribosome.

One of the primary rRNA binding proteins. Required for association of the 30S and 50S subunits to form the 70S ribosome, for tRNA binding and peptide bond formation. It has been suggested to have peptidyltransferase activity; this is somewhat controversial. Makes several contacts with the 16S rRNA in the 70S ribosome. This is Large ribosomal subunit protein uL2 from Parvibaculum lavamentivorans (strain DS-1 / DSM 13023 / NCIMB 13966).